Here is a 366-residue protein sequence, read N- to C-terminus: tRNA(Met) cytidine acetate ligase (366 aa).

Residues 7 to 20, Gly-96, Asn-152, and Arg-175 contribute to the ATP site; that span reads IAEF…HKYL.

The protein belongs to the TmcAL family.

It is found in the cytoplasm. The catalysed reaction is cytidine(34) in elongator tRNA(Met) + acetate + ATP = N(4)-acetylcytidine(34) in elongator tRNA(Met) + AMP + diphosphate. Functionally, catalyzes the formation of N(4)-acetylcytidine (ac(4)C) at the wobble position of elongator tRNA(Met), using acetate and ATP as substrates. First activates an acetate ion to form acetyladenylate (Ac-AMP) and then transfers the acetyl group to tRNA to form ac(4)C34. In Streptococcus mutans serotype c (strain ATCC 700610 / UA159), this protein is tRNA(Met) cytidine acetate ligase.